The following is a 152-amino-acid chain: Transcriptional repressor NrdR (152 aa).

A zinc finger lies at 3-34 (CPSCQHNGTRVLDSRPVDDGKSIRRRRECESC). The ATP-cone domain maps to 49-139 (LIVVKKEGVR…VYRQFKDINV (91 aa)).

Belongs to the NrdR family. It depends on Zn(2+) as a cofactor.

Negatively regulates transcription of bacterial ribonucleotide reductase nrd genes and operons by binding to NrdR-boxes. The protein is Transcriptional repressor NrdR of Bacillus subtilis (strain 168).